Consider the following 236-residue polypeptide: tRNA (guanine-N(7)-)-methyltransferase (236 aa).

The S-adenosyl-L-methionine site is built by Asp-35, Glu-60, Asn-87, and Asp-113. Residue Asp-113 is part of the active site. Substrate-binding residues include Lys-117 and Asp-149. A disordered region spans residues 217-236 (EFEQHWQEIDNPGNAPTPDA).

This sequence belongs to the class I-like SAM-binding methyltransferase superfamily. TrmB family.

The catalysed reaction is guanosine(46) in tRNA + S-adenosyl-L-methionine = N(7)-methylguanosine(46) in tRNA + S-adenosyl-L-homocysteine. It participates in tRNA modification; N(7)-methylguanine-tRNA biosynthesis. Its function is as follows. Catalyzes the formation of N(7)-methylguanine at position 46 (m7G46) in tRNA. In Synechococcus sp. (strain CC9902), this protein is tRNA (guanine-N(7)-)-methyltransferase.